A 129-amino-acid chain; its full sequence is Chorion class A protein L11 (129 aa).

A signal peptide spans 1–21; the sequence is MSTFAFLLLCVQACLIQNVYG. The interval 22-64 is left arm; that stretch reads QCLGRGLGGCGCGGGLGGYGLGYGLGGYGGGYGYGGYGGGYYG. The interval 65–112 is central domain; that stretch reads GYGGEGVGNVGVAGVLPVGGVTAVGGRVPIIGGVEFGGPACAGGCVSI. The interval 113 to 129 is right arm; the sequence is CGHCAPTCGCGYGGLYY.

It belongs to the chorion protein family.

Its function is as follows. This protein is one of many from the eggshell of the silk moth. In Bombyx mori (Silk moth), this protein is Chorion class A protein L11.